Reading from the N-terminus, the 1224-residue chain is Coatomer subunit alpha (1224 aa).

WD repeat units follow at residues 7 to 37 (TKSA…QLWD), 49 to 79 (EHDG…KVWN), 91 to 121 (GHLD…RVWN), and 133 to 163 (GHNH…RVWD). Serine 173 carries the phosphoserine modification. The residue at position 185 (threonine 185) is a Phosphothreonine. 2 WD repeats span residues 203–233 (GHDR…KIWR) and 247–277 (GHYN…RVWD). A Phosphothreonine modification is found at threonine 591. Arginine 965 bears the Omega-N-methylarginine mark. Serine 1193 is subject to Phosphoserine.

As to quaternary structure, oligomeric complex that consists of at least the alpha, beta, beta', gamma, delta, epsilon and zeta subunits. Interacts with SCYL1. Interacts with JAGN1. Interacts with TMEM41B. Interacts with SVEP1. Probably interacts with PEX11A.

The protein localises to the cytoplasm. The protein resides in the golgi apparatus membrane. Its subcellular location is the cytoplasmic vesicle. It localises to the COPI-coated vesicle membrane. It is found in the secreted. Functionally, the coatomer is a cytosolic protein complex that binds to dilysine motifs and reversibly associates with Golgi non-clathrin-coated vesicles, which further mediate biosynthetic protein transport from the ER, via the Golgi up to the trans Golgi network. Coatomer complex is required for budding from Golgi membranes, and is essential for the retrograde Golgi-to-ER transport of dilysine-tagged proteins. In mammals, the coatomer can only be recruited by membranes associated to ADP-ribosylation factors (ARFs), which are small GTP-binding proteins; the complex also influences the Golgi structural integrity, as well as the processing, activity, and endocytic recycling of LDL receptors. Xenin stimulates exocrine pancreatic secretion. It inhibits pentagastrin-stimulated secretion of acid, to induce exocrine pancreatic secretion and to affect small and large intestinal motility. In the gut, xenin interacts with the neurotensin receptor. This Bos taurus (Bovine) protein is Coatomer subunit alpha (COPA).